Here is an 853-residue protein sequence, read N- to C-terminus: DNA mismatch repair protein MutS (853 aa).

Position 614–621 (614–621 (GPNMGGKS)) interacts with ATP.

The protein belongs to the DNA mismatch repair MutS family.

In terms of biological role, this protein is involved in the repair of mismatches in DNA. It is possible that it carries out the mismatch recognition step. This protein has a weak ATPase activity. In Escherichia coli (strain 55989 / EAEC), this protein is DNA mismatch repair protein MutS.